The chain runs to 78 residues: Defensin-like protein 90 (78 aa).

Positions 1–25 (MTTKMFSYVLLHSLMMFAIILSSMG) are cleaved as a signal peptide. Intrachain disulfides connect C33–C70, C38–C59, C44–C68, and C48–C69.

The protein belongs to the DEFL family.

The protein localises to the secreted. This chain is Defensin-like protein 90, found in Arabidopsis thaliana (Mouse-ear cress).